The primary structure comprises 311 residues: Aspartate carbamoyltransferase catalytic subunit (311 aa).

Carbamoyl phosphate-binding residues include arginine 59 and threonine 60. Lysine 87 lines the L-aspartate pocket. Residues arginine 109, histidine 139, and glutamine 142 each coordinate carbamoyl phosphate. Residues arginine 172 and arginine 224 each contribute to the L-aspartate site. Carbamoyl phosphate is bound by residues alanine 265 and proline 266.

It belongs to the aspartate/ornithine carbamoyltransferase superfamily. ATCase family. In terms of assembly, heterododecamer (2C3:3R2) of six catalytic PyrB chains organized as two trimers (C3), and six regulatory PyrI chains organized as three dimers (R2).

It carries out the reaction carbamoyl phosphate + L-aspartate = N-carbamoyl-L-aspartate + phosphate + H(+). Its pathway is pyrimidine metabolism; UMP biosynthesis via de novo pathway; (S)-dihydroorotate from bicarbonate: step 2/3. Functionally, catalyzes the condensation of carbamoyl phosphate and aspartate to form carbamoyl aspartate and inorganic phosphate, the committed step in the de novo pyrimidine nucleotide biosynthesis pathway. The polypeptide is Aspartate carbamoyltransferase catalytic subunit (Streptococcus pyogenes serotype M18 (strain MGAS8232)).